Reading from the N-terminus, the 185-residue chain is Ribosome-recycling factor (185 aa).

It belongs to the RRF family.

The protein resides in the cytoplasm. In terms of biological role, responsible for the release of ribosomes from messenger RNA at the termination of protein biosynthesis. May increase the efficiency of translation by recycling ribosomes from one round of translation to another. This Mycobacterium bovis (strain BCG / Pasteur 1173P2) protein is Ribosome-recycling factor.